The primary structure comprises 374 residues: Acid phosphatase-like protein XcAP-1 (374 aa).

The N-terminal stretch at 1–17 (TTIILLIAFAAIQLSKA) is a signal peptide. Valine 25 is a binding site for serotonin. Disulfide bonds link cysteine 144–cysteine 372, cysteine 165–cysteine 219, and cysteine 345–cysteine 349. Residues aspartate 245, aspartate 249, asparagine 271, and glutamine 283 each contribute to the serotonin site.

The protein belongs to the histidine acid phosphatase family.

The protein resides in the secreted. Its function is as follows. Probably modulates blood feeding of fleas on vertebrate species by binding and sequestering different mediators involved in the host response. Binds biogenic amines: serotonin, adrenaline and noradrenaline. Binds leukotriene C4. Does not bind histamine, leukotriene B4, leukotriene D4, leukotriene E4, ADP, and stable analogs of thromboxane A2: U-46619 and cTXA2. In Xenopsylla cheopis (Oriental rat flea), this protein is Acid phosphatase-like protein XcAP-1.